A 503-amino-acid chain; its full sequence is MSQLKLEEISSVIEEKIKNFELDCDMAEVGKVVSYADGVAKVYGLNGVMSYEVLEFETGDKGVAANLEEDSVGVIVFGFGNNIKEGTSVKRTKSLMKVPVGDAVVGRVLNALGEPIDGKGEIETNEFSLIEQKAPGIMDRKSVHEPLQTGIKAIDALVPIGRGQRELIIGDKQTGKTTVAIDAIINQKGQNVICIYVAIGQKESTVAQVVRKLEEYGAMEYSVVINASASDSAAMQYLAPYSGVAMGEYFRDHARHALIVYDDLSKHAVAYREISLILRRPPGREAFPGDVFYIHSRLLERAAKLCDEKGAGSLTALPIVETQAGDVSAYIPTNIISITDGQIFLETDLFYSGIRPAINVGLSVSRVGGAAQIKATKQVSGTLRLDLAQYRELQAFTQFASDLDEASKKQLERGQRMVEVLKQAPYSPLPIEKQVVIIYAGAKGFLDSVSVKKVVDFEEQLHPFLEAKYPQVLEEIHTKKALDKDLEAMLRKVLEEFKLTYSE.

Residue 170–177 (GDKQTGKT) coordinates ATP.

It belongs to the ATPase alpha/beta chains family. F-type ATPases have 2 components, CF(1) - the catalytic core - and CF(0) - the membrane proton channel. CF(1) has five subunits: alpha(3), beta(3), gamma(1), delta(1), epsilon(1). CF(0) has three main subunits: a(1), b(2) and c(9-12). The alpha and beta chains form an alternating ring which encloses part of the gamma chain. CF(1) is attached to CF(0) by a central stalk formed by the gamma and epsilon chains, while a peripheral stalk is formed by the delta and b chains.

The protein localises to the cell inner membrane. It catalyses the reaction ATP + H2O + 4 H(+)(in) = ADP + phosphate + 5 H(+)(out). Produces ATP from ADP in the presence of a proton gradient across the membrane. The alpha chain is a regulatory subunit. This Helicobacter pylori (strain G27) protein is ATP synthase subunit alpha.